Reading from the N-terminus, the 233-residue chain is Phosphoglycolate phosphatase (233 aa).

Residue Asp9 is the Nucleophile of the active site. Asp9 and Asp11 together coordinate Mg(2+). Lys154 provides a ligand contact to substrate. Asp177 and Asp181 together coordinate Mg(2+).

Belongs to the archaeal SPP-like hydrolase family. It depends on Mg(2+) as a cofactor.

The enzyme catalyses 2-phosphoglycolate + H2O = glycolate + phosphate. In terms of biological role, catalyzes the dephosphorylation of 2-phosphoglycolate. The protein is Phosphoglycolate phosphatase of Pyrococcus abyssi (strain GE5 / Orsay).